A 1479-amino-acid chain; its full sequence is Rhoptry neck protein 2 (1479 aa).

The N-terminal stretch at 1 to 24 (MTKRAGLPLGRAFLVLILLSAADS) is a signal peptide. Residues 25–1277 (LFFSSFPRSA…EQRRKSRKQA (1253 aa)) lie on the Cytoplasmic side of the membrane. 2 disordered regions span residues 49 to 68 (PDSDATPGLRPQPSPRTFRP) and 291 to 316 (VYATPPAPRPVPVQSNQTEKERSPTS). A helical membrane pass occupies residues 1278–1298 (IIGVLTLGMMGLYALLNVADI). Residues 1297–1333 (DIVQHMEDIGGAPPVSCVTNEILGVTCAPQAIAKATT) form an interaction with AMA1 region. At 1299–1479 (VQHMEDIGGA…FPMSAPLIKA (181 aa)) the chain is on the extracellular side. A disulfide bridge links Cys1313 with Cys1323. The disordered stretch occupies residues 1419-1445 (TYRKTEQETKQPPRPRNLHNPSSWGDT).

Belongs to the apicomplexan parasites RON2 family. As to quaternary structure, component of the moving junction (MJ) complex, composed of AMA1, a transmembrane protein on the parasite surface, and a complex of the rhoptry neck proteins RON2, RON4, RON5 and RON8 localized to the cytoplasmic face of the host plasma membrane. Interacts (via C-terminus) with AMA1 (via ectodomain); RON2 serves as the receptor for AMA1 on the host plasma membrane. AMA1 and the RON proteins are initially in distinct compartments within the parasite, namely the micronemes and the rhoptries, and interaction happens only upon initiation of invasion when the micronemes and rhoptries discharge.

It localises to the secreted. It is found in the cytoplasm. The protein localises to the host cell membrane. Functionally, essential rhoptry neck protein that plays an important role in host cell invasion. Upon host invasion by tachyzoites, the protein is injected into the host cell where it functions as a receptor for apical membrane antigen 1 (AMA1) on the parasite. Part of the moving junction (MJ) complex, a ringlike structure formed between the plasma membranes of the apical tip of the parasite and the target host cell. During invasion, the MJ migrates from the anterior to the posterior of the parasite, leading to internalization of the parasite into a parasitophorous vacuole (PV). The sequence is that of Rhoptry neck protein 2 (RON2) from Toxoplasma gondii (strain ATCC 50611 / Me49).